The chain runs to 274 residues: MQQLQNIIETAFERRAEITPANADTVTREAVNQVIALLDSGALRVAEKIDGQWVTHQWLKKAVLLSFRINDNQVIEGAESRYFDKVPMKFANYDEALFQKEGFRVVPPAAVRQGAFIARNTVLMPSYVNIGAYVDEGTMVDTWATVGSCAQIGKNVHLSGGVGIGGVLEPLQANPTIIEDNCFIGARSEVVEGVIVEEGSVISMGVYIGQSTRIYDRETGEIHYGRVPAGSVVVSGNLPSKDGKYSLYCAVIVKKVDAKTRGKVGINELLRTID.

R104 and D141 together coordinate substrate.

Belongs to the transferase hexapeptide repeat family. Homotrimer.

It localises to the cytoplasm. It catalyses the reaction (S)-2,3,4,5-tetrahydrodipicolinate + succinyl-CoA + H2O = (S)-2-succinylamino-6-oxoheptanedioate + CoA. It participates in amino-acid biosynthesis; L-lysine biosynthesis via DAP pathway; LL-2,6-diaminopimelate from (S)-tetrahydrodipicolinate (succinylase route): step 1/3. The sequence is that of 2,3,4,5-tetrahydropyridine-2,6-dicarboxylate N-succinyltransferase from Escherichia coli O6:H1 (strain CFT073 / ATCC 700928 / UPEC).